The chain runs to 655 residues: Spastin (655 aa).

At 1-58 the chain is on the cytoplasmic side; the sequence is MLFDLINSFLKNGINNSNNNNNNNNNKNNFYNSLEDDDYLLNNQTTKVSLYLYFFIFA. The helical intramembrane region spans 59–79; the sequence is FMFLVVDLIMLYYKHRENIES. The Cytoplasmic segment spans residues 80-655; it reads RETDLSLKLN…EKWNQKFGTI (576 aa). Residues 102–140 show a composition bias toward low complexity; it reads KSSPTTSTTTTTITPTTTSSSQLRQPSTPKTTTKTINSP. A disordered region spans residues 102–151; it reads KSSPTTSTTTTTITPTTTSSSQLRQPSTPKTTTKTINSPPSTPKSPPPLP. Residues 141–151 are compositionally biased toward pro residues; sequence PSTPKSPPPLP. Residues 169–232 enclose the MIT domain; that stretch reads LNEAKSQIDS…KRAEYLKNEL (64 aa). Positions 261–325 are disordered; that stretch reads EQQQQQQQQS…TITSPGNKYG (65 aa). The span at 262-320 shows a compositional bias: low complexity; it reads QQQQQQQQSSSTYRNSLNLSSSKSNSTINNRHSISSLSSLNSTTATTTTPSNTSTITSP. 424-431 is an ATP binding site; sequence GPPGNGKT.

This sequence belongs to the AAA ATPase family. Spastin subfamily. In terms of assembly, homohexamer. The homohexamer is stabilized by ATP-binding. The homohexamer may adopt a ring conformation through which microtubules pass prior to being severed. Interacts with microtubules.

The protein localises to the membrane. It localises to the cytoplasm. The protein resides in the cytoskeleton. Its subcellular location is the microtubule organizing center. It is found in the centrosome. The catalysed reaction is n ATP + n H2O + a microtubule = n ADP + n phosphate + (n+1) alpha/beta tubulin heterodimers.. Functionally, ATP-dependent microtubule severing protein. Microtubule severing may promote reorganization of cellular microtubule arrays and the release of microtubules from the microtubule organizing center following nucleation. This Dictyostelium discoideum (Social amoeba) protein is Spastin.